A 1405-amino-acid polypeptide reads, in one-letter code: Protein crumbs homolog 1 (1405 aa).

A signal peptide spans methionine 1 to cysteine 27. Topologically, residues asparagine 28 to arginine 1339 are extracellular. Residues asparagine 30–glutamate 67 enclose the EGF-like 1; atypical domain. 33 disulfide bridges follow: cysteine 34-cysteine 45, cysteine 39-cysteine 54, cysteine 55-cysteine 66, cysteine 73-cysteine 84, cysteine 78-cysteine 95, cysteine 97-cysteine 106, cysteine 113-cysteine 124, cysteine 118-cysteine 133, cysteine 135-cysteine 144, cysteine 151-cysteine 162, cysteine 156-cysteine 171, cysteine 173-cysteine 182, cysteine 189-cysteine 200, cysteine 194-cysteine 209, cysteine 211-cysteine 220, cysteine 227-cysteine 238, cysteine 232-cysteine 247, cysteine 249-cysteine 258, cysteine 265-cysteine 276, cysteine 270-cysteine 285, cysteine 287-cysteine 297, cysteine 304-cysteine 315, cysteine 309-cysteine 324, cysteine 326-cysteine 335, cysteine 342-cysteine 353, cysteine 347-cysteine 382, cysteine 384-cysteine 393, cysteine 400-cysteine 411, cysteine 405-cysteine 420, cysteine 422-cysteine 437, cysteine 444-cysteine 455, cysteine 449-cysteine 468, and cysteine 470-cysteine 479. Asparagine 41 carries N-linked (GlcNAc...) asparagine glycosylation. 2 consecutive EGF-like domains span residues leucine 69–glutamate 107 and alanine 109–glutamate 145. The EGF-like 4; calcium-binding domain maps to aspartate 147 to aspartate 183. Positions glutamate 185–glutamate 221 constitute an EGF-like 5; calcium-binding domain. Residues glutamate 223 to glutamate 259 form the EGF-like 6; calcium-binding domain. 5 consecutive EGF-like domains span residues serine 261–glutamate 298, leucine 300–glutamate 336, aspartate 338–glutamate 394, aspartate 396–serine 438, and isoleucine 440–glutamate 480. The region spanning valine 482 to cysteine 669 is the Laminin G-like 1 domain. N-linked (GlcNAc...) asparagine glycans are attached at residues asparagine 560 and asparagine 656. 4 disulfides stabilise this stretch: cysteine 641–cysteine 669, cysteine 675–cysteine 686, cysteine 680–cysteine 695, and cysteine 697–cysteine 706. The EGF-like 12 domain occupies glycine 671–leucine 707. One can recognise a Laminin G-like 2 domain in the interval glycine 713–cysteine 884. Asparagine 756 and asparagine 879 each carry an N-linked (GlcNAc...) asparagine glycan. Disulfide bonds link cysteine 850/cysteine 884, cysteine 890/cysteine 901, cysteine 895/cysteine 910, cysteine 912/cysteine 921, cysteine 927/cysteine 938, and cysteine 932/cysteine 947. EGF-like domains follow at residues glycine 886–glutamate 922 and glutamine 923–glutamate 959. A Laminin G-like 3 domain is found at asparagine 950–cysteine 1136. Residues asparagine 967, asparagine 974, and asparagine 999 are each glycosylated (N-linked (GlcNAc...) asparagine). Disulfide bonds link cysteine 1095–cysteine 1136, cysteine 1142–cysteine 1153, cysteine 1147–cysteine 1162, cysteine 1164–cysteine 1173, cysteine 1180–cysteine 1190, cysteine 1185–cysteine 1199, cysteine 1201–cysteine 1210, cysteine 1217–cysteine 1228, cysteine 1222–cysteine 1237, cysteine 1239–cysteine 1248, cysteine 1258–cysteine 1273, cysteine 1267–cysteine 1282, cysteine 1284–cysteine 1293, cysteine 1300–cysteine 1311, cysteine 1305–cysteine 1320, and cysteine 1322–cysteine 1331. The EGF-like 15 domain maps to proline 1138 to glutamate 1174. An EGF-like 16; calcium-binding domain is found at asparagine 1176 to glutamate 1211. The N-linked (GlcNAc...) asparagine glycan is linked to asparagine 1189. EGF-like domains are found at residues aspartate 1213–arginine 1249 and proline 1254–glutamate 1294. N-linked (GlcNAc...) asparagine glycosylation is found at asparagine 1242 and asparagine 1264. Residues aspartate 1296 to glutamate 1332 form the EGF-like 19; calcium-binding domain. Residues leucine 1340–leucine 1360 form a helical membrane-spanning segment. Residues alanine 1361 to isoleucine 1405 are Cytoplasmic-facing.

The protein belongs to the Crumbs protein family. As to quaternary structure, component of a complex composed of PALS1, CRB1 and EPB41L5. Within the complex, interacts (via intracellular domain) with PALS1 and EPB41L5 (via FERM domain). Forms a complex with MPP4 and PALS1. Interacts with MPDZ/MUPP1 and MPP4. Post-translationally, glycosylated. Expressed in the kidney, lung, stomach and testis. Expressed in the brain. Expressed in the retina of the eye. Expressed in the outer nuclear layer, photoreceptor layer and inner nuclear layer of the retina. Expressed in Mueller cell radial processes in the inner nuclear layer, in apical processes sclerad to the external limiting membrane, and in the subapical region, adjacent to the adherens junction of retinal photoreceptors. In the brain, expressed in the granular layer of the cerebellum, the hippocampal dentate gyrus, the olfactory bulbs, the subventricular region lining the telencephalic ventricles and the rostral migratory stream. As to expression, ubiquitously expressed.

It localises to the apical cell membrane. The protein resides in the secreted. It is found in the cell projection. Its subcellular location is the cilium. The protein localises to the photoreceptor outer segment. It localises to the photoreceptor inner segment. The protein resides in the cytoplasm. It is found in the cell junction. Its subcellular location is the focal adhesion. Its function is as follows. Plays a role in photoreceptor morphogenesis in the retina. May maintain cell polarization and adhesion. Functionally, may play a role in epidermal tissue morphogenesis. May function in cell attachment for stratified epithelial organization. The chain is Protein crumbs homolog 1 (Crb1) from Mus musculus (Mouse).